The primary structure comprises 476 residues: Flavin-dependent halogenase otaD (476 aa).

The FAD site is built by glycine 14 and glycine 17. The chloride site is built by serine 304 and glycine 305. Valine 306 contacts FAD.

The protein belongs to the flavin-dependent halogenase family.

The catalysed reaction is ochratoxin B + FADH2 + chloride + O2 = ochratoxin A + FAD + 2 H2O. Its pathway is mycotoxin biosynthesis. Functionally, flavin-dependent halogenase; part of the gene cluster that mediates the biosynthesis of ochratoxin A (OTA), a mycotoxin composed of a chlorinated type I polyketide dihydroisocoumarin moiety linked to L-phenylalanine, and demonstrated to have nephrotoxic, immunotoxic, genotoxic, neurotoxic, and teratogenic properties. OtaD chlorinates ochratoxin B (OTB) at the C-5 position to form OTA. The pathway begins with the highly reducing polyketide synthase otaA that catalyzes the formation of the isocoumarin group during the initial stages of biosynthesis, starting from one acetate and 4 malonate units, to originate the characteristic pentaketide skeleton 7-methylmellein (7-MM) of the OTA molecule. The newly identified cyclase otaY might be involved in the polyketide cyclization reaction during the initial steps of the OTA biosynthesis. 7-MM is then oxidized into 7-carboxymellein (also called ochratoxin beta) by the cytochrome P450 monooxygenase otaC. The NRPS encoded by the otaB gene is involved in the linking of phenylalanine to the dihydroisocoumarin ring. The reaction catalyzed by NRPS results in the production of ochratoxin B (OTB), which is the non-chlorinated analog of OTA and which subsequently serves as the substrate of the halogenase otaD for chlorination activity to form the final molecular structure of OTA, containing a chlorine atom in the C-5 position of the molecule. This is Flavin-dependent halogenase otaD from Aspergillus niger (strain ATCC MYA-4892 / CBS 513.88 / FGSC A1513).